The chain runs to 238 residues: Orotidine 5'-phosphate decarboxylase (238 aa).

Residues aspartate 11, lysine 32, aspartate 59 to threonine 68, threonine 123, arginine 185, glutamine 194, glycine 214, and arginine 215 contribute to the substrate site. Lysine 61 serves as the catalytic Proton donor.

This sequence belongs to the OMP decarboxylase family. Type 1 subfamily. As to quaternary structure, homodimer.

It carries out the reaction orotidine 5'-phosphate + H(+) = UMP + CO2. Its pathway is pyrimidine metabolism; UMP biosynthesis via de novo pathway; UMP from orotate: step 2/2. Catalyzes the decarboxylation of orotidine 5'-monophosphate (OMP) to uridine 5'-monophosphate (UMP). This chain is Orotidine 5'-phosphate decarboxylase, found in Nostoc sp. (strain PCC 7120 / SAG 25.82 / UTEX 2576).